The primary structure comprises 394 residues: Na(+)/H(+) antiporter NhaA (394 aa).

The next 11 membrane-spanning stretches (helical) occupy residues 17–37 (ILLM…LAGV), 59–79 (LLLW…GLEV), 95–115 (SLPS…YLAF), 124–144 (VGWA…MALL), 154–174 (VFLL…IALF), 177–197 (TDLS…MVAL), 213–233 (FILW…GVII), 261–281 (FMIL…NMTL), 287–307 (PITL…VLLF), 328–348 (IIPV…IASL), and 363–383 (LGIL…LAKV).

This sequence belongs to the NhaA Na(+)/H(+) (TC 2.A.33) antiporter family.

The protein resides in the cell inner membrane. It catalyses the reaction Na(+)(in) + 2 H(+)(out) = Na(+)(out) + 2 H(+)(in). Its function is as follows. Na(+)/H(+) antiporter that extrudes sodium in exchange for external protons. The chain is Na(+)/H(+) antiporter NhaA from Shewanella frigidimarina (strain NCIMB 400).